Here is a 178-residue protein sequence, read N- to C-terminus: Large ribosomal subunit protein uL10 (178 aa).

It belongs to the universal ribosomal protein uL10 family. In terms of assembly, part of the ribosomal stalk of the 50S ribosomal subunit. The N-terminus interacts with L11 and the large rRNA to form the base of the stalk. The C-terminus forms an elongated spine to which L12 dimers bind in a sequential fashion forming a multimeric L10(L12)X complex.

Its function is as follows. Forms part of the ribosomal stalk, playing a central role in the interaction of the ribosome with GTP-bound translation factors. This chain is Large ribosomal subunit protein uL10, found in Albidiferax ferrireducens (strain ATCC BAA-621 / DSM 15236 / T118) (Rhodoferax ferrireducens).